We begin with the raw amino-acid sequence, 232 residues long: U-scoloptoxin(11)-Sa3a (232 aa).

The N-terminal stretch at 1-21 is a signal peptide; it reads MFQFCLLILLLAPGRFFSALG.

The protein belongs to the scoloptoxin-11 family. Post-translationally, contains 8 disulfide bonds. As to expression, expressed by the venom gland.

The protein localises to the secreted. The chain is U-scoloptoxin(11)-Sa3a from Scolopendra alternans (Florida Keys giant centipede).